We begin with the raw amino-acid sequence, 507 residues long: MAQNDHETVDMLLVGAGIMSATLAVLLKELDPNLKMEVVELQESGAIESSNPWNNAGTGHAGLCELNYTPQSADGSIDIKKAVGINTMFEVSKQFWSHLVAKGTFGSPKTFINPVPHLSFVRGSEGIAYLKKRFESLTKHHAFETMVYSEDKATLAEWMPLMMPGRPADEAIAATRVEGGTDVNFGALTNQLLQHLAQQPGAQIRYNQKVTHLRRADNGWRVTVKDTRNGGDREIQARFVFLGAGGGALPLLQLSGIPEGKGFGGFPVSGQWLRCDNPEIVKQHQAKVYSQAEVGSPPMSVPHLDTRVVDGKKSLLFGPYAGFSTKFLRHGSFLDLPLSVRPGNILPMLSVARDNMDLTRYLIGQVMQSPEQRLEALRKFYPEARAEDWRLEVAGQRVQIIKKDPKKGGILQFGTELVAAHDGSIAALLGASPGASVTVSIMLGLIERCFPEQARSPEWSAKLKEIFPAREKELESDAELYRSVSSRCSEVLELTAKNDVQAPVNAE.

Belongs to the MQO family. Requires FAD as cofactor.

The enzyme catalyses (S)-malate + a quinone = a quinol + oxaloacetate. Its pathway is carbohydrate metabolism; tricarboxylic acid cycle; oxaloacetate from (S)-malate (quinone route): step 1/1. In Pseudomonas aeruginosa (strain ATCC 15692 / DSM 22644 / CIP 104116 / JCM 14847 / LMG 12228 / 1C / PRS 101 / PAO1), this protein is Probable malate:quinone oxidoreductase 2.